The chain runs to 174 residues: Disulfide bond formation protein B (174 aa).

Residues 1–14 (MLHIFYIYSKSRKF) lie on the Cytoplasmic side of the membrane. The chain crosses the membrane as a helical span at residues 15 to 31 (WAILICSSISLISIALL). Topologically, residues 32-49 (NQFFFLLKPCILCIYQRC) are periplasmic. An intrachain disulfide couples Cys-41 to Cys-44. A helical membrane pass occupies residues 50–65 (SLFGITIAGLIALISP). The Cytoplasmic segment spans residues 66-72 (KTTLLRL). The helical transmembrane segment at 73-90 (FSIFIWLYSAIKGLYFSN) threads the bilayer. The Periplasmic segment spans residues 91-146 (IHMQTTLHPSSSLTCDLFVSFPNWLPLNKWYPIIFDSKISNCYSYPQYLLYLEISQ). An intrachain disulfide couples Cys-105 to Cys-132. The chain crosses the membrane as a helical span at residues 147-165 (WMLLFFLIYLIIAIFTIIS). At 166–174 (QCHNLFQKK) the chain is on the cytoplasmic side.

The protein belongs to the DsbB family.

The protein resides in the cell inner membrane. Functionally, required for disulfide bond formation in some periplasmic proteins. Acts by oxidizing the DsbA protein. This chain is Disulfide bond formation protein B, found in Blochmanniella floridana.